The chain runs to 1083 residues: FACT complex subunit spt16 (1083 aa).

Phosphoserine is present on Ser437. A coiled-coil region spans residues 466 to 504; that stretch reads LESKLRNEINTEEKRKEHQRELAQQLNERAKDRLARQGN. Residues 923–1083 are disordered; it reads FEQGGWTFLD…NGHKSKKSRH (161 aa). The segment covering 935–987 has biased composition (acidic residues); that stretch reads SGSEGENETAESEEDEAYNPTDAESDEESDEDSEYSEASEDSEESDEDLGSDE. Over residues 988–1023 the composition is skewed to basic and acidic residues; the sequence is ESGKDWSDLEREAAEEDRNHDYAADDKPRNGKFDSK. Residues 1024 to 1033 show a composition bias toward basic residues; sequence KHGKSSKHSP. The segment covering 1058 to 1076 has biased composition (basic and acidic residues); that stretch reads SSKDKDRKRSRDDSRDNGH.

Belongs to the peptidase M24 family. SPT16 subfamily. In terms of assembly, component of the FACT complex, a stable heterodimer of dre4/spt16 and Ssrp. Interacts with TRL/GAGA.

It localises to the nucleus. It is found in the chromosome. In terms of biological role, component of the FACT complex, a general chromatin factor that acts to reorganize nucleosomes. The FACT complex is involved in multiple processes that require DNA as a template such as mRNA elongation, DNA replication and DNA repair. During transcription elongation the FACT complex acts as a histone chaperone that both destabilizes and restores nucleosomal structure. It facilitates the passage of RNA polymerase II and transcription by promoting the dissociation of one histone H2A-H2B dimer from the nucleosome, then subsequently promotes the reestablishment of the nucleosome following the passage of RNA polymerase II. The FACT complex is required for expression of Hox genes. The sequence is that of FACT complex subunit spt16 (dre4) from Drosophila melanogaster (Fruit fly).